The primary structure comprises 425 residues: Probable G-protein coupled receptor 63 (425 aa).

The Extracellular segment spans residues 1–87 (MVVSGVLTAP…VFKSLNLAVQ (87 aa)). N-linked (GlcNAc...) asparagine glycans are attached at residues Asn-22, Asn-34, and Asn-68. Residues 88–112 (IILSAIMIFILFVSFLGNLVVCLMV) form a helical membrane-spanning segment. Residues 113–123 (YQKAAMRSAIN) lie on the Cytoplasmic side of the membrane. Residues 124 to 148 (ILLASLAFADMLLAVLNMPFALVTI) traverse the membrane as a helical segment. Topologically, residues 149–165 (LTTRWIFGKFFCRLSAM) are extracellular. Residues 166–190 (FFWLFVIEGVAILLIISIDRFLIIV) traverse the membrane as a helical segment. Over 191-202 (QRQDKLNPYRAK) the chain is Cytoplasmic. Residues 203–222 (VLIAVSWATAFSVAFPLAVG) form a helical membrane-spanning segment. At 223–247 (NPDLQIPSRAPQCVFGYTTNSGYQA) the chain is on the extracellular side. A helical membrane pass occupies residues 248-272 (YVILISLISFFIPFLVILYSFMGIL). At 273-321 (NTLRHNALRIHSYPEGICLSQASKLGLMSLQRPFQMSIDMGFKTRAFTT) the chain is on the cytoplasmic side. Residues 322 to 345 (ILILFAVFIVCWAPFTTYSLVATF) traverse the membrane as a helical segment. At 346–357 (SKHFYYQHNFFE) the chain is on the extracellular side. The chain crosses the membrane as a helical span at residues 358 to 379 (ISTWLLWLCYLKSALNPLIYYW). Topologically, residues 380-425 (RIKKFHDACLDMMPKSFKFLPRLPGHTRRRIRPSAVYVCGEHRTVL) are cytoplasmic.

The protein belongs to the G-protein coupled receptor 1 family. Brain specific.

It is found in the cell membrane. In terms of biological role, orphan receptor. May play a role in brain function. The protein is Probable G-protein coupled receptor 63 (Gpr63) of Mus musculus (Mouse).